Reading from the N-terminus, the 211-residue chain is Uracil phosphoribosyltransferase (211 aa).

Residues R79, R104, and 131–139 each bind 5-phospho-alpha-D-ribose 1-diphosphate; that span reads DPMLATGGS. Uracil contacts are provided by residues I196 and 201–203; that span reads GDA. Residue D202 coordinates 5-phospho-alpha-D-ribose 1-diphosphate.

It belongs to the UPRTase family. Mg(2+) serves as cofactor.

The catalysed reaction is UMP + diphosphate = 5-phospho-alpha-D-ribose 1-diphosphate + uracil. It functions in the pathway pyrimidine metabolism; UMP biosynthesis via salvage pathway; UMP from uracil: step 1/1. With respect to regulation, allosterically activated by GTP. Functionally, catalyzes the conversion of uracil and 5-phospho-alpha-D-ribose 1-diphosphate (PRPP) to UMP and diphosphate. The chain is Uracil phosphoribosyltransferase from Lactococcus lactis subsp. cremoris (strain SK11).